A 330-amino-acid polypeptide reads, in one-letter code: Protoheme IX farnesyltransferase (330 aa).

The next 9 helical transmembrane spans lie at 30–50 (LVKPKIIALLLMTTAGAMWMA), 58–78 (FFITLLGGGIAAAAANVINMV), 106–126 (LIFSGILALAAFGLLAIFTNL), 127–147 (LAAGLAMSGILVYVGVYTHWL), 155–175 (IVIGGAAGAIPPLVGWAATTG), 182–202 (WVMFAIIFLWTPPHFWALAIL), 228–248 (ILLYALLMVPVSLLLVYPLGM), 249–269 (LGSFYLSAAALLGSLLVWKAV), and 281–301 (AASLFTFANLYLLLLCGAMGL).

This sequence belongs to the UbiA prenyltransferase family. Protoheme IX farnesyltransferase subfamily.

The protein localises to the cell inner membrane. The catalysed reaction is heme b + (2E,6E)-farnesyl diphosphate + H2O = Fe(II)-heme o + diphosphate. It participates in porphyrin-containing compound metabolism; heme O biosynthesis; heme O from protoheme: step 1/1. Converts heme B (protoheme IX) to heme O by substitution of the vinyl group on carbon 2 of heme B porphyrin ring with a hydroxyethyl farnesyl side group. This is Protoheme IX farnesyltransferase from Synechococcus sp. (strain JA-2-3B'a(2-13)) (Cyanobacteria bacterium Yellowstone B-Prime).